A 442-amino-acid chain; its full sequence is Trigger factor (442 aa).

In terms of domain architecture, PPIase FKBP-type spans 165 to 250 (DDTAQIDFEG…LHKILQKELP (86 aa)).

This sequence belongs to the FKBP-type PPIase family. Tig subfamily.

Its subcellular location is the cytoplasm. The enzyme catalyses [protein]-peptidylproline (omega=180) = [protein]-peptidylproline (omega=0). In terms of biological role, involved in protein export. Acts as a chaperone by maintaining the newly synthesized protein in an open conformation. Functions as a peptidyl-prolyl cis-trans isomerase. The protein is Trigger factor of Helicobacter hepaticus (strain ATCC 51449 / 3B1).